We begin with the raw amino-acid sequence, 323 residues long: MSLDRKLHVVVLMGGWANEREVSLMSGEGVAKALEKRGHTVTRIDMDRQVAAKIAEAAPDVVFNALHGVPGEDGTVQGMLDLMGVPYTHSGLATSVIAIDKELTKQQLVPRGIPMPGGRIVQSEDLYQQDPLARPYVLKPVNEGSSVGVAIVTDESNYGNPIRRDAPGPWQEFRELLAEPFIRGRELTTAVVGGQALAVTELKPKSGFYDFDAKYTDGMTEHVCPADIPPEIEALCKKYALEAHRILGCRGTSRTDYRWDDEQGDDGLFVLETNTQPGMTPLSLVPEQAAYAGMSYEDLVEAIVEAALEHFAAKTGGNDGDQG.

Residues 105 to 305 (KQQLVPRGIP…YEDLVEAIVE (201 aa)) enclose the ATP-grasp domain. 131-188 (PLARPYVLKPVNEGSSVGVAIVTDESNYGNPIRRDAPGPWQEFRELLAEPFIRGRELT) is an ATP binding site. Mg(2+) is bound by residues aspartate 256, glutamate 272, and asparagine 274.

This sequence belongs to the D-alanine--D-alanine ligase family. It depends on Mg(2+) as a cofactor. The cofactor is Mn(2+).

The protein resides in the cytoplasm. The enzyme catalyses 2 D-alanine + ATP = D-alanyl-D-alanine + ADP + phosphate + H(+). The protein operates within cell wall biogenesis; peptidoglycan biosynthesis. Its function is as follows. Cell wall formation. The protein is D-alanine--D-alanine ligase of Erythrobacter litoralis (strain HTCC2594).